The sequence spans 1265 residues: Protein transport protein SEC31 (1265 aa).

7 WD repeats span residues E6–D46, T61–D105, K116–A156, T162–H202, G209–K252, G256–E296, and T299–S339. A WD 8; interaction with SEC13 repeat occupies S380–D403. A compositionally biased stretch (basic and acidic residues) spans K457–N480. 3 disordered regions span residues K457 to F485, V765 to R784, and P793 to N1163. A compositionally biased stretch (pro residues) spans A794–P810. 5 stretches are compositionally biased toward low complexity: residues L811 to P824, T865 to G875, A901 to P931, S939 to G951, and S969 to A987. Positions S1004 to P1023 are enriched in polar residues. Pro residues-rich tracts occupy residues Y1062–V1071 and A1083–P1101.

Belongs to the WD repeat SEC31 family. The COPII coat is composed of at least 5 proteins: the SEC23/24 complex, the SEC13/31 complex, and the protein SAR1. SEC13 and SEC31 make a 2:2 tetramer that forms the edge element of the COPII outer coat. The tetramer self-assembles in multiple copies to form the complete polyhedral cage. Interacts (via WD 8) with SEC13.

It localises to the cytoplasmic vesicle. The protein localises to the COPII-coated vesicle membrane. The protein resides in the endoplasmic reticulum membrane. Component of the coat protein complex II (COPII) which promotes the formation of transport vesicles from the endoplasmic reticulum (ER). The coat has two main functions, the physical deformation of the endoplasmic reticulum membrane into vesicles and the selection of cargo molecules. This chain is Protein transport protein SEC31 (PGA63), found in Candida albicans (strain SC5314 / ATCC MYA-2876) (Yeast).